Here is a 1115-residue protein sequence, read N- to C-terminus: Gamma tubulin complex adapter mto1 (1115 aa).

A disordered region spans residues Leu25–Leu180. Basic and acidic residues-rich tracts occupy residues Glu28–Ser41 and Glu56–Lys71. 3 stretches are compositionally biased toward polar residues: residues Ser72–Leu102, Asp119–Ile130, and Pro139–Glu151. Ser94 is modified (phosphoserine). Residues Ser165 to Ser176 show a composition bias toward low complexity. Residues Asn445–Val915 are a coiled coil. The tract at residues Leu523–Leu537 is required for interaction with mto2. Polar residues predominate over residues Gly1001 to Arg1011. 2 disordered regions span residues Gly1001–Arg1037 and Glu1067–Lys1115. Ser1005 and Ser1009 each carry phosphoserine. Basic and acidic residues-rich tracts occupy residues Val1016–Leu1025 and Glu1067–Asp1084. A coiled-coil region spans residues Lys1072–Ser1102. Composition is skewed to polar residues over residues Ile1086–Gln1095 and Ser1104–Lys1115.

Interacts with mto2; the interaction is direct and required for efficient binding to the gamma-tubulin complex. Interacts with gamma tubulin complex subunits alp4, alp6 and gtb1. Interacts with mcp6.

It is found in the cytoplasm. The protein resides in the cytoskeleton. It localises to the microtubule organizing center. Its subcellular location is the spindle pole body. Functionally, spindle pole body (SPB) component that acts as the gamma-tubulin complex-binding protein of the SPB outer plaque. Promotes nucleation of all cytoplasmic microtubules by recruiting the gamma-tubulin complex to the spindle pole body (SPB), to the interphase microtubule organizing center (iMTOC), and to the equatorial MTOC (eMTOC) during anaphase. The chain is Gamma tubulin complex adapter mto1 from Schizosaccharomyces pombe (strain 972 / ATCC 24843) (Fission yeast).